Here is a 354-residue protein sequence, read N- to C-terminus: UPF0425 pyridoxal phosphate-dependent protein MMP0002 (354 aa).

The residue at position 210 (K210) is an N6-(pyridoxal phosphate)lysine.

This sequence belongs to the UPF0425 family. Requires pyridoxal 5'-phosphate as cofactor.

The protein is UPF0425 pyridoxal phosphate-dependent protein MMP0002 of Methanococcus maripaludis (strain DSM 14266 / JCM 13030 / NBRC 101832 / S2 / LL).